The primary structure comprises 114 residues: Large ribosomal subunit protein uL22 (114 aa).

The protein belongs to the universal ribosomal protein uL22 family. In terms of assembly, part of the 50S ribosomal subunit.

Its function is as follows. This protein binds specifically to 23S rRNA; its binding is stimulated by other ribosomal proteins, e.g. L4, L17, and L20. It is important during the early stages of 50S assembly. It makes multiple contacts with different domains of the 23S rRNA in the assembled 50S subunit and ribosome. The globular domain of the protein is located near the polypeptide exit tunnel on the outside of the subunit, while an extended beta-hairpin is found that lines the wall of the exit tunnel in the center of the 70S ribosome. This is Large ribosomal subunit protein uL22 from Bacillus licheniformis (strain ATCC 14580 / DSM 13 / JCM 2505 / CCUG 7422 / NBRC 12200 / NCIMB 9375 / NCTC 10341 / NRRL NRS-1264 / Gibson 46).